The primary structure comprises 506 residues: Ecdysteroid UDP-glucosyltransferase (506 aa).

Positions M1–S18 are cleaved as a signal peptide.

This sequence belongs to the UDP-glycosyltransferase family.

Catalyzes the transfer of glucose from UDP-glucose to ecdysteroids which are insect molting hormones. Expression of egt interferes with normal insect development and block molting. The sequence is that of Ecdysteroid UDP-glucosyltransferase (EGT) from Lymantria dispar multicapsid nuclear polyhedrosis virus (LdMNPV).